A 327-amino-acid chain; its full sequence is DNA-directed RNA polymerase subunit alpha (327 aa).

The interval 1-233 (MVREKVKVST…NLFIPFLHVE (233 aa)) is alpha N-terminal domain (alpha-NTD). The tract at residues 267-327 (LAFQYIFIDQ…KKILDILEKK (61 aa)) is alpha C-terminal domain (alpha-CTD).

Belongs to the RNA polymerase alpha chain family. As to quaternary structure, in plastids the minimal PEP RNA polymerase catalytic core is composed of four subunits: alpha, beta, beta', and beta''. When a (nuclear-encoded) sigma factor is associated with the core the holoenzyme is formed, which can initiate transcription.

It is found in the plastid. Its subcellular location is the chloroplast. It carries out the reaction RNA(n) + a ribonucleoside 5'-triphosphate = RNA(n+1) + diphosphate. DNA-dependent RNA polymerase catalyzes the transcription of DNA into RNA using the four ribonucleoside triphosphates as substrates. This chain is DNA-directed RNA polymerase subunit alpha, found in Crucihimalaya wallichii (Rock-cress).